A 420-amino-acid chain; its full sequence is RNA-directed RNA polymerase (420 aa).

In terms of domain architecture, RdRp catalytic spans 199-325 (GTICETDISG…IWFKGLEEYL (127 aa)).

It belongs to the ssRNA positive-strand viruses RNA-directed RNA polymerase family. Might be cleaved to release the mature protein(s).

It carries out the reaction RNA(n) + a ribonucleoside 5'-triphosphate = RNA(n+1) + diphosphate. Functionally, RNA-dependent RNA polymerase which replicates the viral genome. This Mushroom bacilliform virus (isolate Australia/AUS LF-1) (MBV) protein is RNA-directed RNA polymerase.